Reading from the N-terminus, the 352-residue chain is ER-derived vesicles protein ERV41 (352 aa).

Topologically, residues methionine 1–lysine 23 are cytoplasmic. The helical transmembrane segment at glycine 24–glycine 44 threads the bilayer. At glutamate 45 to serine 311 the chain is on the lumenal side. The chain crosses the membrane as a helical span at residues phenylalanine 312–methionine 332. Residues glycine 333–arginine 352 lie on the Cytoplasmic side of the membrane. An Isoleucine-leucine motif motif is present at residues isoleucine 349–leucine 350.

The protein belongs to the ERGIC family. In terms of assembly, interacts with ERV46.

The protein resides in the endoplasmic reticulum membrane. The protein localises to the golgi apparatus membrane. Its subcellular location is the cytoplasmic vesicle. It is found in the COPII-coated vesicle membrane. Constituent of COPII-coated endoplasmic reticulum-derived transport vesicles. Required for efficient transport of a subset of secretory proteins to the Golgi. The C-terminal Ile-Leu motif is required for exit from the endoplasmic reticulum. Facilitates retrograde transport from the Golgi to the endoplasmic reticulum. The sequence is that of ER-derived vesicles protein ERV41 (ERV41) from Saccharomyces cerevisiae (strain ATCC 204508 / S288c) (Baker's yeast).